Consider the following 994-residue polypeptide: cGMP-dependent protein kinase (994 aa).

The tract at residues Met1 to Lys162 is disordered. Gly2 carries N-myristoyl glycine lipidation. Cys4 is lipidated: S-palmitoyl cysteine. Composition is skewed to low complexity over residues Ser9–Ser22 and Gly33–Glu46. Basic and acidic residues-rich tracts occupy residues Glu65–Pro80 and Glu133–Lys162. CNMP-binding domain stretches follow at residues Val189–Ser305, Phe308–Gly407, Gly463–Gly539, and Ile561–Ile660. 5 residues coordinate 3',5'-cyclic GMP: Gly253, Glu254, Ala256, Arg263, and Ser264. Residues Arg616, Gly625, Glu626, Ala628, Arg635, and Thr636 each coordinate 3',5'-cyclic GMP. Residues Leu684 to Phe941 form the Protein kinase domain. Residues Val690–Val698 and Lys713 contribute to the ATP site. Asp807 functions as the Proton acceptor in the catalytic mechanism. The 53-residue stretch at Gly942–Phe994 folds into the AGC-kinase C-terminal domain. A disordered region spans residues Leu954–Leu976. Residues Tyr965–Leu976 are compositionally biased toward acidic residues.

Belongs to the protein kinase superfamily. AGC Ser/Thr protein kinase family. cGMP subfamily. Requires Mg(2+) as cofactor.

The protein resides in the cytoplasm. It is found in the membrane. Its subcellular location is the cell membrane. It catalyses the reaction L-seryl-[protein] + ATP = O-phospho-L-seryl-[protein] + ADP + H(+). It carries out the reaction L-threonyl-[protein] + ATP = O-phospho-L-threonyl-[protein] + ADP + H(+). Activated by cGMP. The cGMP-binding domains acts cooperatively to activate PKG. Inhibited by the antiparasitic small molecule 4-[2-(4-fluorophenyl)-5-(1-methylpiperidine-4-yl)-1Hpyrrol- 3-yl]pyridine (compound 1). Serine/threonine protein kinase which acts as a downstream effector of the second messenger cGMP. Plays an essential role in tachyzoite invasion of and egress from host cells. During invasion of host cells, regulates the apico-basal flux of F-actin probably via Ca(2+)-mediated activation of CDPK1. In tachyzoites, required for microneme secretion. Required for tachyzoite gliding motility. Its function is as follows. Plays an essential role in parasite invasion of and egress from host cells, and microneme secretion. Functionally, dispensable for parasite invasion of and egress from host cells, and microneme secretion. In Toxoplasma gondii, this protein is cGMP-dependent protein kinase.